Here is a 106-residue protein sequence, read N- to C-terminus: Met repressor (106 aa).

It belongs to the MetJ family. In terms of assembly, homodimer.

The protein localises to the cytoplasm. In terms of biological role, this regulatory protein, when combined with SAM (S-adenosylmethionine) represses the expression of the methionine regulon and of enzymes involved in SAM synthesis. This is Met repressor from Vibrio campbellii (strain ATCC BAA-1116).